The chain runs to 231 residues: ATP-dependent dethiobiotin synthetase BioD (231 aa).

ATP is bound at residue 12–17; sequence EVGKTV. Residue T16 coordinates Mg(2+). Residue K37 is part of the active site. S41 is a binding site for substrate. ATP contacts are provided by residues D51, 112-115, and 202-204; these read EGAG and PKL. Residues D51 and E112 each coordinate Mg(2+).

The protein belongs to the dethiobiotin synthetase family. In terms of assembly, homodimer. Requires Mg(2+) as cofactor.

The protein localises to the cytoplasm. It catalyses the reaction (7R,8S)-7,8-diammoniononanoate + CO2 + ATP = (4R,5S)-dethiobiotin + ADP + phosphate + 3 H(+). It functions in the pathway cofactor biosynthesis; biotin biosynthesis; biotin from 7,8-diaminononanoate: step 1/2. In terms of biological role, catalyzes a mechanistically unusual reaction, the ATP-dependent insertion of CO2 between the N7 and N8 nitrogen atoms of 7,8-diaminopelargonic acid (DAPA, also called 7,8-diammoniononanoate) to form a ureido ring. The sequence is that of ATP-dependent dethiobiotin synthetase BioD from Bacillus subtilis (strain 168).